The chain runs to 111 residues: Small ribosomal subunit protein bS16 (111 aa).

The interval 92 to 111 is disordered; it reads EKGVKESNEIVEPEGEEVKE. Residues 100–111 are compositionally biased toward acidic residues; the sequence is EIVEPEGEEVKE.

The protein belongs to the bacterial ribosomal protein bS16 family.

The chain is Small ribosomal subunit protein bS16 from Petrotoga mobilis (strain DSM 10674 / SJ95).